We begin with the raw amino-acid sequence, 71 residues long: UPF0346 protein SMU_1621c (71 aa).

The protein belongs to the UPF0346 family.

In Streptococcus mutans serotype c (strain ATCC 700610 / UA159), this protein is UPF0346 protein SMU_1621c.